The following is a 517-amino-acid chain: Acetylcholine receptor subunit gamma (517 aa).

The first 22 residues, methionine 1–glycine 22, serve as a signal peptide directing secretion. The Extracellular portion of the chain corresponds to arginine 23–lysine 240. Asparagine 52 and asparagine 163 each carry an N-linked (GlcNAc...) asparagine glycan. Cysteine 150 and cysteine 164 are joined by a disulfide. Transmembrane regions (helical) follow at residues proline 241 to leucine 265, threonine 275 to lysine 293, and leucine 309 to serine 330. Topologically, residues leucine 331 to arginine 474 are cytoplasmic. A helical membrane pass occupies residues valine 475–alanine 495.

This sequence belongs to the ligand-gated ion channel (TC 1.A.9) family. Acetylcholine receptor (TC 1.A.9.1) subfamily. Gamma/CHRNG sub-subfamily. In terms of assembly, pentamer of two alpha chains, and one each of the beta, delta, and gamma (in immature muscle) or epsilon (in mature muscle) chains.

It localises to the postsynaptic cell membrane. It is found in the cell membrane. It carries out the reaction K(+)(in) = K(+)(out). It catalyses the reaction Na(+)(in) = Na(+)(out). Its function is as follows. After binding acetylcholine, the AChR responds by an extensive change in conformation that affects all subunits and leads to opening of an ion-conducting channel across the plasma membrane. In Homo sapiens (Human), this protein is Acetylcholine receptor subunit gamma.